We begin with the raw amino-acid sequence, 262 residues long: Acyl-[acyl-carrier-protein]--UDP-N-acetylglucosamine O-acyltransferase (262 aa).

This sequence belongs to the transferase hexapeptide repeat family. LpxA subfamily. In terms of assembly, homotrimer.

It is found in the cytoplasm. The catalysed reaction is a (3R)-hydroxyacyl-[ACP] + UDP-N-acetyl-alpha-D-glucosamine = a UDP-3-O-[(3R)-3-hydroxyacyl]-N-acetyl-alpha-D-glucosamine + holo-[ACP]. It functions in the pathway glycolipid biosynthesis; lipid IV(A) biosynthesis; lipid IV(A) from (3R)-3-hydroxytetradecanoyl-[acyl-carrier-protein] and UDP-N-acetyl-alpha-D-glucosamine: step 1/6. Involved in the biosynthesis of lipid A, a phosphorylated glycolipid that anchors the lipopolysaccharide to the outer membrane of the cell. In Burkholderia ambifaria (strain ATCC BAA-244 / DSM 16087 / CCUG 44356 / LMG 19182 / AMMD) (Burkholderia cepacia (strain AMMD)), this protein is Acyl-[acyl-carrier-protein]--UDP-N-acetylglucosamine O-acyltransferase.